A 109-amino-acid chain; its full sequence is Putative double-stranded DNA mimic protein YciU (109 aa).

This sequence belongs to the putative dsDNA mimic protein family.

In terms of biological role, may act as a double-stranded DNA (dsDNA) mimic. Probably regulates the activity of a dsDNA-binding protein. The chain is Putative double-stranded DNA mimic protein YciU from Shigella boydii serotype 18 (strain CDC 3083-94 / BS512).